The following is a 116-amino-acid chain: Large ribosomal subunit protein bL20 (116 aa).

Belongs to the bacterial ribosomal protein bL20 family.

Functionally, binds directly to 23S ribosomal RNA and is necessary for the in vitro assembly process of the 50S ribosomal subunit. It is not involved in the protein synthesizing functions of that subunit. The protein is Large ribosomal subunit protein bL20 (rplT) of Helicobacter pylori (strain ATCC 700392 / 26695) (Campylobacter pylori).